Here is a 219-residue protein sequence, read N- to C-terminus: Protein ERP1 (219 aa).

An N-terminal signal peptide occupies residues 1–22 (MLLTSLLQVFACCLVLPAQVTA). The Lumenal portion of the chain corresponds to 23–186 (FYYYTSGAER…RDASEAVNSR (164 aa)). Residues 32-131 (RKCFHKELSK…KTKIDVEFQV (100 aa)) enclose the GOLD domain. A helical transmembrane segment spans residues 187 to 207 (AMWWIVIQLIVLAVTCGWQMK). The Cytoplasmic segment spans residues 208–219 (HLGKFFVKQKIL).

This sequence belongs to the EMP24/GP25L family. Associates with EMP24, ERV25 and ERP2.

It is found in the endoplasmic reticulum membrane. Involved in vesicular protein trafficking. The protein is Protein ERP1 (ERP1) of Saccharomyces cerevisiae (strain ATCC 204508 / S288c) (Baker's yeast).